A 409-amino-acid polypeptide reads, in one-letter code: Arginine deiminase (409 aa).

The active-site Amidino-cysteine intermediate is the cysteine 399.

This sequence belongs to the arginine deiminase family.

The protein localises to the cytoplasm. It catalyses the reaction L-arginine + H2O = L-citrulline + NH4(+). Its pathway is amino-acid degradation; L-arginine degradation via ADI pathway; carbamoyl phosphate from L-arginine: step 1/2. In Streptococcus pneumoniae (strain JJA), this protein is Arginine deiminase.